A 142-amino-acid chain; its full sequence is Phosphoribosyl-AMP cyclohydrolase (142 aa).

Asp-92 contributes to the Mg(2+) binding site. Cys-93 is a binding site for Zn(2+). 2 residues coordinate Mg(2+): Asp-94 and Asp-96. Residues Cys-109 and Cys-116 each coordinate Zn(2+).

Belongs to the PRA-CH family. As to quaternary structure, homodimer. The cofactor is Mg(2+). It depends on Zn(2+) as a cofactor.

The protein resides in the cytoplasm. It catalyses the reaction 1-(5-phospho-beta-D-ribosyl)-5'-AMP + H2O = 1-(5-phospho-beta-D-ribosyl)-5-[(5-phospho-beta-D-ribosylamino)methylideneamino]imidazole-4-carboxamide. The protein operates within amino-acid biosynthesis; L-histidine biosynthesis; L-histidine from 5-phospho-alpha-D-ribose 1-diphosphate: step 3/9. Catalyzes the hydrolysis of the adenine ring of phosphoribosyl-AMP. The polypeptide is Phosphoribosyl-AMP cyclohydrolase (Alkalilimnicola ehrlichii (strain ATCC BAA-1101 / DSM 17681 / MLHE-1)).